Here is a 394-residue protein sequence, read N- to C-terminus: Elongation factor Tu (394 aa).

In terms of domain architecture, tr-type G spans 10 to 204; the sequence is KPHVNVGTIG…YLDSYIPEPE (195 aa). The tract at residues 19 to 26 is G1; sequence GHVDHGKT. 19-26 contributes to the GTP binding site; the sequence is GHVDHGKT. Threonine 26 serves as a coordination point for Mg(2+). The G2 stretch occupies residues 60 to 64; sequence GITIN. Residues 81–84 form a G3 region; it reads DCPG. GTP is bound by residues 81 to 85 and 136 to 139; these read DCPGH and NKCD. The tract at residues 136–139 is G4; the sequence is NKCD. Residues 174 to 176 form a G5 region; it reads SAL.

The protein belongs to the TRAFAC class translation factor GTPase superfamily. Classic translation factor GTPase family. EF-Tu/EF-1A subfamily. In terms of assembly, monomer.

It localises to the cytoplasm. The enzyme catalyses GTP + H2O = GDP + phosphate + H(+). In terms of biological role, GTP hydrolase that promotes the GTP-dependent binding of aminoacyl-tRNA to the A-site of ribosomes during protein biosynthesis. The chain is Elongation factor Tu from Enterobacter sp. (strain 638).